We begin with the raw amino-acid sequence, 166 residues long: uncharacterized protein (166 aa).

The next 4 membrane-spanning stretches (helical) occupy residues 7 to 27 (VLFK…SLFY), 30 to 50 (FLFA…YCYI), 69 to 89 (IETL…KSLL), and 92 to 112 (NSFF…LVLF).

It to M.jannaschii MJ0795.1 and MJ0785.1.

It localises to the cell membrane. This is an uncharacterized protein from Methanocaldococcus jannaschii (strain ATCC 43067 / DSM 2661 / JAL-1 / JCM 10045 / NBRC 100440) (Methanococcus jannaschii).